The sequence spans 621 residues: DNA-directed RNA polymerase subunit gamma (621 aa).

Mg(2+)-binding residues include Asp463, Asp465, and Asp467.

It belongs to the RNA polymerase beta' chain family. RpoC1 subfamily. In cyanobacteria the RNAP catalytic core is composed of 2 alpha, 1 beta, 1 beta', 1 gamma and 1 omega subunit. When a sigma factor is associated with the core the holoenzyme is formed, which can initiate transcription. Mg(2+) serves as cofactor.

The enzyme catalyses RNA(n) + a ribonucleoside 5'-triphosphate = RNA(n+1) + diphosphate. Its function is as follows. DNA-dependent RNA polymerase catalyzes the transcription of DNA into RNA using the four ribonucleoside triphosphates as substrates. In Nostoc commune, this protein is DNA-directed RNA polymerase subunit gamma.